The primary structure comprises 487 residues: 3-octaprenyl-4-hydroxybenzoate carboxy-lyase (487 aa).

Residue N172 participates in Mn(2+) binding. Residues 175-177 (IYR), 189-191 (RWL), and 194-195 (RG) each bind prenylated FMN. E238 lines the Mn(2+) pocket. D287 serves as the catalytic Proton donor.

It belongs to the UbiD family. As to quaternary structure, homohexamer. It depends on prenylated FMN as a cofactor. Requires Mn(2+) as cofactor.

The protein localises to the cell membrane. The catalysed reaction is a 4-hydroxy-3-(all-trans-polyprenyl)benzoate + H(+) = a 2-(all-trans-polyprenyl)phenol + CO2. It participates in cofactor biosynthesis; ubiquinone biosynthesis. Functionally, catalyzes the decarboxylation of 3-octaprenyl-4-hydroxy benzoate to 2-octaprenylphenol, an intermediate step in ubiquinone biosynthesis. The protein is 3-octaprenyl-4-hydroxybenzoate carboxy-lyase of Nitrosococcus oceani (strain ATCC 19707 / BCRC 17464 / JCM 30415 / NCIMB 11848 / C-107).